We begin with the raw amino-acid sequence, 581 residues long: Putative adenine deaminase BH0637 (581 aa).

Belongs to the metallo-dependent hydrolases superfamily. Adenine deaminase family.

It catalyses the reaction adenine + H2O + H(+) = hypoxanthine + NH4(+). The protein is Putative adenine deaminase BH0637 of Halalkalibacterium halodurans (strain ATCC BAA-125 / DSM 18197 / FERM 7344 / JCM 9153 / C-125) (Bacillus halodurans).